Reading from the N-terminus, the 525-residue chain is GMP synthase [glutamine-hydrolyzing] (525 aa).

Residues 8-207 (KILILDFGSQ…ALEICGCPAN (200 aa)) enclose the Glutamine amidotransferase type-1 domain. The active-site Nucleophile is the Cys85. Residues His181 and Glu183 contribute to the active site. One can recognise a GMPS ATP-PPase domain in the interval 208–400 (WKPSSIIEDA…LGLPYDMLYR (193 aa)). 235 to 241 (SGGVDSS) is a binding site for ATP.

As to quaternary structure, homodimer.

It carries out the reaction XMP + L-glutamine + ATP + H2O = GMP + L-glutamate + AMP + diphosphate + 2 H(+). It participates in purine metabolism; GMP biosynthesis; GMP from XMP (L-Gln route): step 1/1. Its function is as follows. Catalyzes the synthesis of GMP from XMP. This chain is GMP synthase [glutamine-hydrolyzing], found in Shewanella pealeana (strain ATCC 700345 / ANG-SQ1).